The following is a 312-amino-acid chain: tRNA U34 carboxymethyltransferase (312 aa).

Residues lysine 88, tryptophan 102, lysine 107, glycine 127, 149 to 151 (DPS), 177 to 178 (LD), methionine 191, tyrosine 195, and arginine 304 each bind carboxy-S-adenosyl-L-methionine.

The protein belongs to the class I-like SAM-binding methyltransferase superfamily. CmoB family. In terms of assembly, homotetramer.

It catalyses the reaction carboxy-S-adenosyl-L-methionine + 5-hydroxyuridine(34) in tRNA = 5-carboxymethoxyuridine(34) in tRNA + S-adenosyl-L-homocysteine + H(+). Functionally, catalyzes carboxymethyl transfer from carboxy-S-adenosyl-L-methionine (Cx-SAM) to 5-hydroxyuridine (ho5U) to form 5-carboxymethoxyuridine (cmo5U) at position 34 in tRNAs. This is tRNA U34 carboxymethyltransferase from Dichelobacter nodosus (strain VCS1703A).